Here is a 218-residue protein sequence, read N- to C-terminus: MTPVLYYLPPSPPCRSVLLLAKMIGVELELKALNVMEGEQLKPDFVELNPQHCIPTLDDHGLVLWESRVILAYLVSAYGKDENLYPKDFRSRAIVDQRLHFDLGTLYQRVVDYYFPTIQLGAHLDQTKKAKLAEALGWFEAMLKQYQWSAANHFTIADIALCVTVSQIEAFQFDLHPYPRVRAWLQKCKDELQGHGYKEINETGAETLAGLFRSKLKQ.

The 82-residue stretch at 1–82 (MTPVLYYLPP…YLVSAYGKDE (82 aa)) folds into the GST N-terminal domain. Residues serine 11, 52-54 (HCI), and 66-68 (ESR) each bind glutathione. The GST C-terminal domain occupies 88–207 (DFRSRAIVDQ…KEINETGAET (120 aa)).

The protein belongs to the GST superfamily. Theta family. Homodimer.

It carries out the reaction RX + glutathione = an S-substituted glutathione + a halide anion + H(+). Its function is as follows. Conjugation of reduced glutathione to a wide number of exogenous and endogenous hydrophobic electrophiles. The sequence is that of Glutathione S-transferase D7 from Anopheles gambiae (African malaria mosquito).